The following is a 314-amino-acid chain: MKIVLANPRGFCAGVDRAISIVERALELYKAPIYVRHEVVHNRFVVEGLKQRGAIFVEELSEVPDDNIVIFSAHGVSQAVRTEAKERALTVFDATCPLVTKVHMEVARASKKSIEVVLIGHAGHPEVEGTMGQYASEAGGMYLVETPEDVEKLIVQDPNNLHYVSQTTLSVDETADVIDELRRVFPKIQGPRKDDICYATQNRQDAVRDMAGQVDVMIVVGSKNSSNSNRLRELSEKLGTTSYLIDCPEELKEEWLTNQAKVGVTAGASAPEELVNQIIEQVKVFGGTTVDELKGREENMFFEVPKELQIKTVS.

Residue Cys12 participates in [4Fe-4S] cluster binding. Positions 41 and 74 each coordinate (2E)-4-hydroxy-3-methylbut-2-enyl diphosphate. The dimethylallyl diphosphate site is built by His41 and His74. Isopentenyl diphosphate contacts are provided by His41 and His74. Cys96 is a binding site for [4Fe-4S] cluster. His124 is a binding site for (2E)-4-hydroxy-3-methylbut-2-enyl diphosphate. His124 lines the dimethylallyl diphosphate pocket. His124 lines the isopentenyl diphosphate pocket. Catalysis depends on Glu126, which acts as the Proton donor. Thr167 provides a ligand contact to (2E)-4-hydroxy-3-methylbut-2-enyl diphosphate. Cys197 contacts [4Fe-4S] cluster. Positions 225, 226, 227, and 269 each coordinate (2E)-4-hydroxy-3-methylbut-2-enyl diphosphate. Ser225, Ser226, Asn227, and Ser269 together coordinate dimethylallyl diphosphate. Ser225, Ser226, Asn227, and Ser269 together coordinate isopentenyl diphosphate.

This sequence belongs to the IspH family. It depends on [4Fe-4S] cluster as a cofactor.

The enzyme catalyses isopentenyl diphosphate + 2 oxidized [2Fe-2S]-[ferredoxin] + H2O = (2E)-4-hydroxy-3-methylbut-2-enyl diphosphate + 2 reduced [2Fe-2S]-[ferredoxin] + 2 H(+). It catalyses the reaction dimethylallyl diphosphate + 2 oxidized [2Fe-2S]-[ferredoxin] + H2O = (2E)-4-hydroxy-3-methylbut-2-enyl diphosphate + 2 reduced [2Fe-2S]-[ferredoxin] + 2 H(+). It functions in the pathway isoprenoid biosynthesis; dimethylallyl diphosphate biosynthesis; dimethylallyl diphosphate from (2E)-4-hydroxy-3-methylbutenyl diphosphate: step 1/1. Its pathway is isoprenoid biosynthesis; isopentenyl diphosphate biosynthesis via DXP pathway; isopentenyl diphosphate from 1-deoxy-D-xylulose 5-phosphate: step 6/6. Its function is as follows. Catalyzes the conversion of 1-hydroxy-2-methyl-2-(E)-butenyl 4-diphosphate (HMBPP) into a mixture of isopentenyl diphosphate (IPP) and dimethylallyl diphosphate (DMAPP). Acts in the terminal step of the DOXP/MEP pathway for isoprenoid precursor biosynthesis. This is 4-hydroxy-3-methylbut-2-enyl diphosphate reductase from Aliivibrio salmonicida (strain LFI1238) (Vibrio salmonicida (strain LFI1238)).